The chain runs to 97 residues: Aspartyl/glutamyl-tRNA(Asn/Gln) amidotransferase subunit C (97 aa).

The protein belongs to the GatC family. In terms of assembly, heterotrimer of A, B and C subunits.

It catalyses the reaction L-glutamyl-tRNA(Gln) + L-glutamine + ATP + H2O = L-glutaminyl-tRNA(Gln) + L-glutamate + ADP + phosphate + H(+). The catalysed reaction is L-aspartyl-tRNA(Asn) + L-glutamine + ATP + H2O = L-asparaginyl-tRNA(Asn) + L-glutamate + ADP + phosphate + 2 H(+). Functionally, allows the formation of correctly charged Asn-tRNA(Asn) or Gln-tRNA(Gln) through the transamidation of misacylated Asp-tRNA(Asn) or Glu-tRNA(Gln) in organisms which lack either or both of asparaginyl-tRNA or glutaminyl-tRNA synthetases. The reaction takes place in the presence of glutamine and ATP through an activated phospho-Asp-tRNA(Asn) or phospho-Glu-tRNA(Gln). The sequence is that of Aspartyl/glutamyl-tRNA(Asn/Gln) amidotransferase subunit C from Synechococcus sp. (strain CC9311).